The chain runs to 394 residues: Phosphoglycerate kinase (394 aa).

Residues 21–23 (DFN), arginine 36, 59–62 (HLGR), arginine 118, and arginine 151 contribute to the substrate site. Serine 183 bears the Phosphoserine mark. Lysine 201 is a binding site for ATP. Phosphothreonine is present on threonine 299. ATP is bound by residues glutamate 323 and 350 to 353 (GGDS).

Belongs to the phosphoglycerate kinase family. Monomer.

It is found in the cytoplasm. It catalyses the reaction (2R)-3-phosphoglycerate + ATP = (2R)-3-phospho-glyceroyl phosphate + ADP. It functions in the pathway carbohydrate degradation; glycolysis; pyruvate from D-glyceraldehyde 3-phosphate: step 2/5. This chain is Phosphoglycerate kinase, found in Geobacillus sp. (strain WCH70).